The chain runs to 707 residues: Polyribonucleotide nucleotidyltransferase (707 aa).

2 residues coordinate Mg(2+): aspartate 486 and aspartate 492. In terms of domain architecture, KH spans 553–612 (PRIHKIKINPEKIKDVIGKGGSVIRMLTEETGTIIEIEDDGTIKISATIGEKAKNAIRRI). The region spanning 622-690 (GRIYSGKVTR…RQGRLRLSIK (69 aa)) is the S1 motif domain.

This sequence belongs to the polyribonucleotide nucleotidyltransferase family. In terms of assembly, component of the RNA degradosome, which is a multiprotein complex involved in RNA processing and mRNA degradation. Mg(2+) serves as cofactor.

The protein localises to the cytoplasm. The enzyme catalyses RNA(n+1) + phosphate = RNA(n) + a ribonucleoside 5'-diphosphate. In terms of biological role, involved in mRNA degradation. Catalyzes the phosphorolysis of single-stranded polyribonucleotides processively in the 3'- to 5'-direction. The polypeptide is Polyribonucleotide nucleotidyltransferase (Buchnera aphidicola subsp. Schizaphis graminum (strain Sg)).